The primary structure comprises 313 residues: 2,3-dihydroxyphenylpropionate/2,3-dihydroxicinnamic acid 1,2-dioxygenase (313 aa).

His115 acts as the Proton donor in catalysis. Catalysis depends on His179, which acts as the Proton acceptor.

It belongs to the LigB/MhpB extradiol dioxygenase family. Homotetramer. Requires Fe(2+) as cofactor.

It carries out the reaction 3-(2,3-dihydroxyphenyl)propanoate + O2 = (2Z,4E)-2-hydroxy-6-oxonona-2,4-dienedioate + H(+). The enzyme catalyses (2E)-3-(2,3-dihydroxyphenyl)prop-2-enoate + O2 = (2Z,4E,7E)-2-hydroxy-6-oxonona-2,4,7-trienedioate + H(+). It participates in aromatic compound metabolism; 3-phenylpropanoate degradation. Catalyzes the non-heme iron(II)-dependent oxidative cleavage of 2,3-dihydroxyphenylpropionic acid and 2,3-dihydroxicinnamic acid into 2-hydroxy-6-ketononadienedioate and 2-hydroxy-6-ketononatrienedioate, respectively. The polypeptide is 2,3-dihydroxyphenylpropionate/2,3-dihydroxicinnamic acid 1,2-dioxygenase (Mycolicibacterium smegmatis (strain ATCC 700084 / mc(2)155) (Mycobacterium smegmatis)).